Consider the following 485-residue polypeptide: Serine/threonine-protein kinase dst4 (485 aa).

A Protein kinase domain is found at 21 to 278 (FRVLEVIGQG…AVDLLNHPFI (258 aa)). Residues 27 to 35 (IGQGSFGVV) and Lys50 each bind ATP. The Proton acceptor role is filled by Asp142. Disordered regions lie at residues 304–343 (RRKK…SAGL), 360–424 (VMRE…GSVV), and 436–485 (SMKL…NQDD). Over residues 310–324 (EEEAEEAEEGDDYDD) the composition is skewed to acidic residues. Residues 370 to 393 (SNNGGTFIYNNNNNNSSKTSSSGT) are compositionally biased toward low complexity. Acidic residues-rich tracts occupy residues 406 to 417 (DDDDDDDIEEGG) and 450 to 468 (SSDE…EEGG). The span at 474–485 (VVYTKSPVNQDD) shows a compositional bias: polar residues.

It belongs to the protein kinase superfamily. STE Ser/Thr protein kinase family. STE20 subfamily. Requires Mg(2+) as cofactor.

The catalysed reaction is L-seryl-[protein] + ATP = O-phospho-L-seryl-[protein] + ADP + H(+). The enzyme catalyses L-threonyl-[protein] + ATP = O-phospho-L-threonyl-[protein] + ADP + H(+). The polypeptide is Serine/threonine-protein kinase dst4 (Dictyostelium discoideum (Social amoeba)).